The chain runs to 779 residues: Tricorn protease-interacting factor F3 (779 aa).

Residues E102 and 231 to 235 (GAMEN) each bind substrate. Residue H266 coordinates Zn(2+). E267 acts as the Proton acceptor in catalysis. Zn(2+) is bound by residues H270 and E289.

This sequence belongs to the peptidase M1 family. As to quaternary structure, part of the tricorn proteolytic complex. It depends on Zn(2+) as a cofactor.

It localises to the cytoplasm. Proteases F1, F2 and F3 degrade oligopeptides produced by Tricorn (themselves probably produced by the proteasome), yielding free amino acids. The chain is Tricorn protease-interacting factor F3 (trf3) from Thermoplasma volcanium (strain ATCC 51530 / DSM 4299 / JCM 9571 / NBRC 15438 / GSS1).